The primary structure comprises 460 residues: Nitrilase and fragile histidine triad fusion protein NitFhit (460 aa).

One can recognise a CN hydrolase domain in the interval 33–279 (ATIAVGQMRS…LDIGTAEVDL (247 aa)). Catalysis depends on residues E72, K142, and C183. The 108-residue stretch at 315–422 (DRPFATNIVD…MPRRLGDFGH (108 aa)) folds into the HIT domain. The short motif at 407 to 411 (HVHFH) is the Histidine triad motif element. H409 functions as the Tele-AMP-histidine intermediate in the catalytic mechanism.

It in the N-terminal section; belongs to the UPF0012 family. As to quaternary structure, homotetramer. Mn(2+) is required as a cofactor.

It carries out the reaction P(1),P(3)-bis(5'-adenosyl) triphosphate + H2O = AMP + ADP + 2 H(+). Cleaves A-5'-PPP-5'A to yield AMP and ADP. The chain is Nitrilase and fragile histidine triad fusion protein NitFhit from Drosophila melanogaster (Fruit fly).